The following is a 110-amino-acid chain: Circadian clock oscillator protein KaiB (110 aa).

This sequence belongs to the KaiB family. As to quaternary structure, the KaiABC complex composition changes during the circadian cycle to control KaiC phosphorylation. Complexes KaiC(6), KaiA(2-4):KaiC(6), KaiB(6):KaiC(6) and KaiC(6):KaiB(6):KaiA(12) are among the most important forms, many form cooperatively. Undergoes a major conformational rearrangment; in the free state forms homotetramers as a dimer of dimers. When bound to the CI domain of KaiC switches to a monomeric thioredoxin-fold (KaiB(fs)). KaiB(fs) binds CikA, leading it to dephosphorylate phospho-RpaA.

Key component of the KaiABC oscillator complex, which constitutes the main circadian regulator in cyanobacteria. Complex composition changes during the circadian cycle to control KaiC phosphorylation. KaiA stimulates KaiC autophosphorylation, while KaiB sequesters KaiA, leading to KaiC autodephosphorylation. Phospho-Ser-431 KaiC accumulation triggers binding of KaiB to form the KaiB(6):KaiC(6) complex, leading to changes in output regulators CikA and SasA. KaiB switches to a thioredoxin-like fold (KaiB(fs)) when bound to KaiC. KaiB(6):KaiC(6) formation exposes a site for KaiA binding that sequesters KaiA from KaiC, making the KaiC(6):KaiB(6):KaiA(12) complex that results in KaiC autodephosphorylation. Its function is as follows. A metamorphic protein which reversibly switches between an inactive tetrameric fold and a rare, thioredoxin-like monomeric fold (KaiB(fs)). KaiB(fs) binds phospho-KaiC, KaiA and CikA. KaiA and CikA compete for binding to KaiB(fs), and KaiB(fs) and SasA compete for binding to KaiC, thus the clock oscillator and output signal pathway are tightly coupled. This Synechococcus sp. (strain RCC307) protein is Circadian clock oscillator protein KaiB.